A 194-amino-acid chain; its full sequence is Ribosome maturation factor RimP (194 aa).

It belongs to the RimP family.

It localises to the cytoplasm. Functionally, required for maturation of 30S ribosomal subunits. This chain is Ribosome maturation factor RimP, found in Jannaschia sp. (strain CCS1).